The chain runs to 958 residues: Glycine dehydrogenase (decarboxylating) 2 (958 aa).

Lys707 bears the N6-(pyridoxal phosphate)lysine mark.

The protein belongs to the GcvP family. In terms of assembly, the glycine cleavage system is composed of four proteins: P, T, L and H. Pyridoxal 5'-phosphate is required as a cofactor.

It catalyses the reaction N(6)-[(R)-lipoyl]-L-lysyl-[glycine-cleavage complex H protein] + glycine + H(+) = N(6)-[(R)-S(8)-aminomethyldihydrolipoyl]-L-lysyl-[glycine-cleavage complex H protein] + CO2. The glycine cleavage system catalyzes the degradation of glycine. The P protein binds the alpha-amino group of glycine through its pyridoxal phosphate cofactor; CO(2) is released and the remaining methylamine moiety is then transferred to the lipoamide cofactor of the H protein. This Pseudomonas aeruginosa (strain ATCC 15692 / DSM 22644 / CIP 104116 / JCM 14847 / LMG 12228 / 1C / PRS 101 / PAO1) protein is Glycine dehydrogenase (decarboxylating) 2 (gcvP2).